The chain runs to 146 residues: Hemoglobin subunit beta (146 aa).

Val-1 carries the post-translational modification N-acetylvaline. The region spanning 2 to 146 is the Globin domain; it reads HLSADEKNAL…VANALAHKYH (145 aa). Ser-44 carries the phosphoserine modification. At Lys-59 the chain carries N6-acetyllysine. His-63 is a heme b binding site. Position 82 is an N6-acetyllysine (Lys-82). His-92 contacts heme b. S-nitrosocysteine is present on Cys-93. N6-acetyllysine is present on Lys-144.

It belongs to the globin family. Heterotetramer of two alpha chains and two beta chains. In terms of tissue distribution, red blood cells.

Involved in oxygen transport from the lung to the various peripheral tissues. The polypeptide is Hemoglobin subunit beta (Sciurus carolinensis (Eastern gray squirrel)).